The sequence spans 156 residues: 6,7-dimethyl-8-ribityllumazine synthase (156 aa).

5-amino-6-(D-ribitylamino)uracil contacts are provided by residues phenylalanine 23, 57 to 59 (AYE), and 81 to 83 (AII). 86–87 (GT) serves as a coordination point for (2S)-2-hydroxy-3-oxobutyl phosphate. The active-site Proton donor is the histidine 89. Residue phenylalanine 114 participates in 5-amino-6-(D-ribitylamino)uracil binding. Arginine 128 contributes to the (2S)-2-hydroxy-3-oxobutyl phosphate binding site.

It belongs to the DMRL synthase family.

It catalyses the reaction (2S)-2-hydroxy-3-oxobutyl phosphate + 5-amino-6-(D-ribitylamino)uracil = 6,7-dimethyl-8-(1-D-ribityl)lumazine + phosphate + 2 H2O + H(+). The protein operates within cofactor biosynthesis; riboflavin biosynthesis; riboflavin from 2-hydroxy-3-oxobutyl phosphate and 5-amino-6-(D-ribitylamino)uracil: step 1/2. Catalyzes the formation of 6,7-dimethyl-8-ribityllumazine by condensation of 5-amino-6-(D-ribitylamino)uracil with 3,4-dihydroxy-2-butanone 4-phosphate. This is the penultimate step in the biosynthesis of riboflavin. This chain is 6,7-dimethyl-8-ribityllumazine synthase, found in Helicobacter pylori (strain P12).